A 108-amino-acid polypeptide reads, in one-letter code: Insulin (108 aa).

Positions 1 to 23 are cleaved as a signal peptide; sequence MALWILLPLLALLILWGPDPAQA. 2 disulfides stabilise this stretch: Cys-30/Cys-94 and Cys-43/Cys-107. Residues 57-88 constitute a propeptide, c peptide; that stretch reads EVEDPQVGQVELGAGPGAGSEQTLALEVARQA.

It belongs to the insulin family. In terms of assembly, heterodimer of a B chain and an A chain linked by two disulfide bonds.

It is found in the secreted. Functionally, insulin decreases blood glucose concentration. It increases cell permeability to monosaccharides, amino acids and fatty acids. It accelerates glycolysis, the pentose phosphate cycle, and glycogen synthesis in liver. In Rodentia sp, this protein is Insulin (INS).